Here is a 320-residue protein sequence, read N- to C-terminus: UV DNA damage endonuclease (320 aa).

It belongs to the uve1/UvsE family.

Functionally, component in a DNA repair pathway. Removal of UV LIGHT damaged nucleotides. Recognizes pyrimidine dimers and cleave a phosphodiester bond immediately 5' to the lesion. The protein is UV DNA damage endonuclease of Bacillus velezensis (strain DSM 23117 / BGSC 10A6 / LMG 26770 / FZB42) (Bacillus amyloliquefaciens subsp. plantarum).